The primary structure comprises 510 residues: NAD(P)H-quinone oxidoreductase subunit 2 B, chloroplastic (510 aa).

13 consecutive transmembrane segments (helical) span residues leucine 26 to leucine 46, isoleucine 57 to phenylalanine 77, isoleucine 99 to isoleucine 119, methionine 124 to cysteine 144, leucine 149 to tyrosine 169, tyrosine 183 to glycine 203, proline 227 to alanine 247, tryptophan 295 to isoleucine 315, methionine 323 to glycine 342, tyrosine 354 to leucine 374, alanine 395 to phenylalanine 415, leucine 418 to phenylalanine 438, and methionine 484 to isoleucine 504.

It belongs to the complex I subunit 2 family. As to quaternary structure, NDH is composed of at least 16 different subunits, 5 of which are encoded in the nucleus.

It localises to the plastid. The protein resides in the chloroplast thylakoid membrane. The catalysed reaction is a plastoquinone + NADH + (n+1) H(+)(in) = a plastoquinol + NAD(+) + n H(+)(out). It catalyses the reaction a plastoquinone + NADPH + (n+1) H(+)(in) = a plastoquinol + NADP(+) + n H(+)(out). In terms of biological role, NDH shuttles electrons from NAD(P)H:plastoquinone, via FMN and iron-sulfur (Fe-S) centers, to quinones in the photosynthetic chain and possibly in a chloroplast respiratory chain. The immediate electron acceptor for the enzyme in this species is believed to be plastoquinone. Couples the redox reaction to proton translocation, and thus conserves the redox energy in a proton gradient. In Oenothera argillicola (Appalachian evening primrose), this protein is NAD(P)H-quinone oxidoreductase subunit 2 B, chloroplastic.